A 110-amino-acid polypeptide reads, in one-letter code: Nucleoid-associated protein Sfri_2406 (110 aa).

This sequence belongs to the YbaB/EbfC family. In terms of assembly, homodimer.

The protein localises to the cytoplasm. It is found in the nucleoid. Its function is as follows. Binds to DNA and alters its conformation. May be involved in regulation of gene expression, nucleoid organization and DNA protection. This Shewanella frigidimarina (strain NCIMB 400) protein is Nucleoid-associated protein Sfri_2406.